Here is a 512-residue protein sequence, read N- to C-terminus: Glutathione-binding protein GsiB (512 aa).

An N-terminal signal peptide occupies residues 1–26; that stretch reads MARAVHRSGLVALGIATALMASCAFA.

Belongs to the bacterial solute-binding protein 5 family. As to quaternary structure, the complex is composed of two ATP-binding proteins (GsiA), two transmembrane proteins (GsiC and GsiD) and a solute-binding protein (GsiB).

Its subcellular location is the periplasm. Functionally, part of the ABC transporter complex GsiABCD involved in glutathione import. Binds glutathione. The chain is Glutathione-binding protein GsiB from Escherichia coli O157:H7.